The sequence spans 79 residues: UPF0175 protein APE_0890a.1 (79 aa).

It belongs to the UPF0175 family.

The sequence is that of UPF0175 protein APE_0890a.1 from Aeropyrum pernix (strain ATCC 700893 / DSM 11879 / JCM 9820 / NBRC 100138 / K1).